The chain runs to 209 residues: Cyclin-dependent kinase inhibitor 2 (209 aa).

The required for nuclear localization stretch occupies residues 1-32 (MAAVRRRERDVVEENGVTTTTVKRRKMEEEVD).

It belongs to the CDI family. ICK/KRP subfamily. In terms of assembly, specifically interacts with CDKA-1, but not with CDKB1-1. Phosphorylated.

It is found in the nucleus. The protein resides in the nucleoplasm. Functionally, binds and inhibits CYCD2-1/CDKA-1 complex kinase activity. Regulates cell division which is crucial for plant growth, development and morphogenesis. May regulate early lateral root initiation by blocking the G1/S phase transition. Controls the mitosis-to-endocycle transition and the onset of the endoreduplication cycle during leaf development through inhibition of mitotic CDKA-1 kinase complexes. Specifically targets CDKA-1. The polypeptide is Cyclin-dependent kinase inhibitor 2 (KRP2) (Arabidopsis thaliana (Mouse-ear cress)).